The following is a 204-amino-acid chain: MAFGYDTITPEPVAKLIDEFNRLPGIGPKSASRLVFYLLRAKREQSERLANAIMAMKDSTIFCNRCFNITVEDPCTICTNANRNERQVCVVEEPLDVVALERTGEFKGLYHVLHGAISPVEGINPEDLRIRELLARLRVEPIEEVILSTNPNLEGDATAAYLAREIIPLGIRVTRLARGLPMGSDLEYADEVTLGRALQGRREM.

A C4-type zinc finger spans residues 63–78 (CNRCFNITVEDPCTIC). Residues 86–181 (RQVCVVEEPL…RVTRLARGLP (96 aa)) enclose the Toprim domain.

This sequence belongs to the RecR family.

Functionally, may play a role in DNA repair. It seems to be involved in an RecBC-independent recombinational process of DNA repair. It may act with RecF and RecO. The polypeptide is Recombination protein RecR (Herpetosiphon aurantiacus (strain ATCC 23779 / DSM 785 / 114-95)).